Here is a 133-residue protein sequence, read N- to C-terminus: Large ribosomal subunit protein eL32z (133 aa).

Belongs to the eukaryotic ribosomal protein eL32 family.

The polypeptide is Large ribosomal subunit protein eL32z (RPL32A) (Arabidopsis thaliana (Mouse-ear cress)).